The chain runs to 332 residues: 1-acyl-sn-glycerol-3-phosphate acyltransferase CHLREDRAFT_174358 (332 aa).

A helical membrane pass occupies residues 96 to 116 (FLLSLPLFVTMMVMAPLVLAF). The short motif at 163–168 (HQSFLD) is the HXXXXD motif element. A helical membrane pass occupies residues 185–205 (TSNFLIPIIGWSMFLTGHVMI). The EGTR motif signature appears at 235–238 (EGTR).

The protein belongs to the 1-acyl-sn-glycerol-3-phosphate acyltransferase family.

The protein localises to the membrane. The catalysed reaction is a 1-acyl-sn-glycero-3-phosphate + an acyl-CoA = a 1,2-diacyl-sn-glycero-3-phosphate + CoA. Its pathway is phospholipid metabolism; CDP-diacylglycerol biosynthesis; CDP-diacylglycerol from sn-glycerol 3-phosphate: step 2/3. Functionally, converts lysophosphatidic acid (LPA) into phosphatidic acid by incorporating an acyl moiety at the sn-2 position of the glycerol backbone. The sequence is that of 1-acyl-sn-glycerol-3-phosphate acyltransferase CHLREDRAFT_174358 from Chlamydomonas reinhardtii (Chlamydomonas smithii).